Here is a 62-residue protein sequence, read N- to C-terminus: Large ribosomal subunit protein eL24 (62 aa).

Zn(2+) contacts are provided by C7, C10, C33, and C37. The C4-type zinc-finger motif lies at 7–37; sequence CDYCGDDIEPGTGTMFVHNDGSTVHFCSAKC.

The protein belongs to the eukaryotic ribosomal protein eL24 family. In terms of assembly, part of the 50S ribosomal subunit. Forms a cluster with proteins L3 and L14. The cofactor is Zn(2+).

Binds to the 23S rRNA. The polypeptide is Large ribosomal subunit protein eL24 (Halobacterium salinarum (strain ATCC 29341 / DSM 671 / R1)).